Reading from the N-terminus, the 475-residue chain is UDP-N-acetylmuramate--L-alanine ligase (475 aa).

125–131 lines the ATP pocket; the sequence is GTHGKTT.

It belongs to the MurCDEF family.

Its subcellular location is the cytoplasm. It catalyses the reaction UDP-N-acetyl-alpha-D-muramate + L-alanine + ATP = UDP-N-acetyl-alpha-D-muramoyl-L-alanine + ADP + phosphate + H(+). Its pathway is cell wall biogenesis; peptidoglycan biosynthesis. In terms of biological role, cell wall formation. This is UDP-N-acetylmuramate--L-alanine ligase from Actinobacillus pleuropneumoniae serotype 5b (strain L20).